We begin with the raw amino-acid sequence, 1374 residues long: DNA-directed RNA polymerase subunit beta (1374 aa).

It belongs to the RNA polymerase beta chain family. The RNAP catalytic core consists of 2 alpha, 1 beta, 1 beta' and 1 omega subunit. When a sigma factor is associated with the core the holoenzyme is formed, which can initiate transcription.

The catalysed reaction is RNA(n) + a ribonucleoside 5'-triphosphate = RNA(n+1) + diphosphate. In terms of biological role, DNA-dependent RNA polymerase catalyzes the transcription of DNA into RNA using the four ribonucleoside triphosphates as substrates. The polypeptide is DNA-directed RNA polymerase subunit beta (Rickettsia typhi (strain ATCC VR-144 / Wilmington)).